The following is a 362-amino-acid chain: 3-dehydroquinate synthase (362 aa).

NAD(+) is bound by residues 70–75 (DGEKYK), 104–108 (GVIGD), 128–129 (TT), lysine 141, lysine 150, and 168–171 (TLNT). 3 residues coordinate Zn(2+): glutamate 183, histidine 246, and histidine 263.

It belongs to the sugar phosphate cyclases superfamily. Dehydroquinate synthase family. The cofactor is NAD(+). Co(2+) serves as cofactor. Zn(2+) is required as a cofactor.

The protein resides in the cytoplasm. The catalysed reaction is 7-phospho-2-dehydro-3-deoxy-D-arabino-heptonate = 3-dehydroquinate + phosphate. It participates in metabolic intermediate biosynthesis; chorismate biosynthesis; chorismate from D-erythrose 4-phosphate and phosphoenolpyruvate: step 2/7. Its function is as follows. Catalyzes the conversion of 3-deoxy-D-arabino-heptulosonate 7-phosphate (DAHP) to dehydroquinate (DHQ). This is 3-dehydroquinate synthase from Haemophilus influenzae (strain ATCC 51907 / DSM 11121 / KW20 / Rd).